The following is a 179-amino-acid chain: NADH dehydrogenase [ubiquinone] 1 beta subcomplex subunit 9 (179 aa).

The residue at position 2 (Ala2) is an N-acetylalanine. The residue at position 85 (Ser85) is a Phosphoserine.

It belongs to the complex I LYR family. Mammalian complex I is composed of 45 different subunits.

The protein localises to the mitochondrion inner membrane. In terms of biological role, accessory subunit of the mitochondrial membrane respiratory chain NADH dehydrogenase (Complex I), that is believed to be not involved in catalysis. Complex I functions in the transfer of electrons from NADH to the respiratory chain. The immediate electron acceptor for the enzyme is believed to be ubiquinone. The protein is NADH dehydrogenase [ubiquinone] 1 beta subcomplex subunit 9 (Ndufb9) of Mus musculus (Mouse).